Consider the following 177-residue polypeptide: Decaprenylphosphoryl-5-phosphoribose phosphatase (177 aa).

A run of 4 helical transmembrane segments spans residues 35–55 (HFGE…IALP), 62–82 (LVAG…KRLV), 124–144 (GLPL…LLGV), and 150–170 (VAVG…VGGG).

It belongs to the PA-phosphatase related phosphoesterase family.

It is found in the cell membrane. The enzyme catalyses trans,octa-cis-decaprenylphospho-beta-D-ribofuranose 5-phosphate + H2O = trans,octa-cis-decaprenylphospho-beta-D-ribofuranose + phosphate. Its pathway is cell wall biogenesis; cell wall polysaccharide biosynthesis. Its function is as follows. Phosphatase involved in the biosynthesis of decaprenylphosphoryl arabinose (DPA), which serves as the arabinose donor for the biosynthesis of arabinogalactan, the major mycobacterial cell wall polysaccharide. Catalyzes the dephosphorylation of decaprenylphosphoryl-5-phosphoribose (DPPR) to decaprenyl-phosphoribose (DPR). The polypeptide is Decaprenylphosphoryl-5-phosphoribose phosphatase (Mycobacterium tuberculosis (strain CDC 1551 / Oshkosh)).